We begin with the raw amino-acid sequence, 205 residues long: UPF0111 protein YkaA (205 aa).

This sequence belongs to the UPF0111 family.

The polypeptide is UPF0111 protein YkaA (ykaA) (Bacillus subtilis (strain 168)).